Reading from the N-terminus, the 235-residue chain is Secretory carrier-associated membrane protein 5 (235 aa).

Over 1–39 (MAEKVNNFPPLPKFIPLKPCFYQDFEADIPPQHLSLTKR) the chain is Cytoplasmic. The chain crosses the membrane as a helical span at residues 40-60 (LYYLWMLNSVTLAVNLVGCLA). Over 61–67 (WLIGGGG) the chain is Extracellular. The helical transmembrane segment at 68–88 (ATNFGLAFLWLILFTPCSYVC) threads the bilayer. Topologically, residues 89-102 (WFRPIYKAFKTDSS) are cytoplasmic. Residues 103-125 (FSFMAFFFTFMAQLVISIIQAVG) form a helical membrane-spanning segment. Residues 126-148 (IPGWGVCGWIATISFFGTNIGSA) lie on the Extracellular side of the membrane. Residues 149-169 (VVMLIPTVMFTVVAVFSFIAL) form a helical membrane-spanning segment. Residues 170 to 235 (SMVHKFYRGS…TPNYTYSNEM (66 aa)) are Cytoplasmic-facing.

It belongs to the SCAMP family. SCAMP5 subfamily. In terms of assembly, interacts (via C-terminal part) with SYT1 and SYT2; interaction with synaptotagmins making a link with the SNARE molecules. Interacts with SLC9A7. As to expression, brain-specific.

The protein localises to the cell membrane. It localises to the golgi apparatus membrane. It is found in the golgi apparatus. The protein resides in the trans-Golgi network membrane. Its subcellular location is the recycling endosome membrane. The protein localises to the cytoplasmic vesicle. It localises to the secretory vesicle. It is found in the synaptic vesicle membrane. In terms of biological role, required for the calcium-dependent exocytosis of signal sequence-containing cytokines such as CCL5. Probably acts in cooperation with the SNARE machinery. The polypeptide is Secretory carrier-associated membrane protein 5 (Scamp5) (Mus musculus (Mouse)).